Consider the following 510-residue polypeptide: Polyamine aminopropyltransferase 2 (510 aa).

Transmembrane regions (helical) follow at residues 6-26, 38-58, 74-94, 102-122, 140-160, and 165-185; these read ALLV…ELIA, ILQF…GSWV, LELL…LLFA, LVLY…IPLV, VLTF…LVLA, and LVRT…WTLW. The PABS domain maps to 205–449; the sequence is AGMVGAALLA…GEWGFILAAP (245 aa). Residues 207-456 are spermidine synthase; sequence MVGAALLAGF…AAPGRADFRP (250 aa). Glutamine 244 contributes to the S-methyl-5'-thioadenosine binding site. Spermidine-binding residues include histidine 274 and aspartate 298. Residues aspartate 318 and 352 to 353 contribute to the S-methyl-5'-thioadenosine site; that span reads DA. Aspartate 370 (proton acceptor) is an active-site residue.

Belongs to the spermidine/spermine synthase family. Homodimer or homotetramer.

The protein resides in the cell membrane. It catalyses the reaction S-adenosyl 3-(methylsulfanyl)propylamine + putrescine = S-methyl-5'-thioadenosine + spermidine + H(+). The protein operates within amine and polyamine biosynthesis; spermidine biosynthesis; spermidine from putrescine: step 1/1. Its function is as follows. Catalyzes the irreversible transfer of a propylamine group from the amino donor S-adenosylmethioninamine (decarboxy-AdoMet) to putrescine (1,4-diaminobutane) to yield spermidine. This Ralstonia nicotianae (strain ATCC BAA-1114 / GMI1000) (Ralstonia solanacearum) protein is Polyamine aminopropyltransferase 2.